We begin with the raw amino-acid sequence, 372 residues long: Glutamate 5-kinase (372 aa).

K14 is a binding site for ATP. Substrate contacts are provided by S54, D141, and N153. T173–D174 is an ATP binding site. The PUA domain maps to A280–V358.

This sequence belongs to the glutamate 5-kinase family.

It is found in the cytoplasm. It carries out the reaction L-glutamate + ATP = L-glutamyl 5-phosphate + ADP. It functions in the pathway amino-acid biosynthesis; L-proline biosynthesis; L-glutamate 5-semialdehyde from L-glutamate: step 1/2. Catalyzes the transfer of a phosphate group to glutamate to form L-glutamate 5-phosphate. The polypeptide is Glutamate 5-kinase (Janthinobacterium sp. (strain Marseille) (Minibacterium massiliensis)).